We begin with the raw amino-acid sequence, 145 residues long: Deoxyuridine 5'-triphosphate nucleotidohydrolase (145 aa).

Substrate-binding positions include 64–66 (RSG), Asn77, 81–83 (TID), and Met91.

Belongs to the dUTPase family. The cofactor is Mg(2+).

It catalyses the reaction dUTP + H2O = dUMP + diphosphate + H(+). Its pathway is pyrimidine metabolism; dUMP biosynthesis; dUMP from dCTP (dUTP route): step 2/2. Functionally, this enzyme is involved in nucleotide metabolism: it produces dUMP, the immediate precursor of thymidine nucleotides and it decreases the intracellular concentration of dUTP so that uracil cannot be incorporated into DNA. The protein is Deoxyuridine 5'-triphosphate nucleotidohydrolase of Leptospira interrogans serogroup Icterohaemorrhagiae serovar copenhageni (strain Fiocruz L1-130).